The primary structure comprises 281 residues: MFHLKRELSQGCALALICLVSLQMQQPAQAEVSSAQGTPLSNLYDNLLQREYAGPVVFPNHQVERKAQRSPSLRLRFGRSDPDMLNSIVEKRWFGDVNQKPIRSPSLRLRFGRRDPSLPQMRRTAYDDLLERELTLNSQQQQQQLGTEPDSDLGADYDGLYERVVRKPQRLRWGRSVPQFEANNADNEQIERSQWYNSLLNSDKMRRMLVALQQQYEIPENVASYANDEDTDTDLNNDTSEFQREVRKPMRLRWGRSTGKAPSEQKHTPEETSSIPPKTQN.

Residues 1 to 30 form the signal peptide; it reads MFHLKRELSQGCALALICLVSLQMQQPAQA. The propeptide occupies 31–64; that stretch reads EVSSAQGTPLSNLYDNLLQREYAGPVVFPNHQVE. A phenylalanine amide mark is found at Phe-77 and Phe-111. A propeptide spanning residues 115–165 is cleaved from the precursor; it reads DPSLPQMRRTAYDDLLERELTLNSQQQQQQLGTEPDSDLGADYDGLYERVV. Residues 137 to 156 form a disordered region; the sequence is NSQQQQQQLGTEPDSDLGAD. Trp-173 carries the tryptophan amide modification. Positions 176-246 are excised as a propeptide; sequence SVPQFEANNA…NDTSEFQREV (71 aa). The tract at residues 226-281 is disordered; it reads ANDEDTDTDLNNDTSEFQREVRKPMRLRWGRSTGKAPSEQKHTPEETSSIPPKTQN. Trp-254 is subject to Tryptophan amide. A propeptide spanning residues 257–281 is cleaved from the precursor; it reads STGKAPSEQKHTPEETSSIPPKTQN. Polar residues predominate over residues 271-281; that stretch reads ETSSIPPKTQN.

Belongs to the NPY family. Stage 17 embryos show expression in the two brain hemispheres (neural cells located in the dorsal posterior region), the connected ventral ganglion (pairs of neural cells along the ventral midline) and the peripheral nervous system (expressed in the antennal-maxillary sensory cells). In the brain hemispheres of the feeding third instar larva, expression in neural cells is located in the dorsal-anterior region of the protocerebrum. In the larval ventral ganglion, expression is seen in the neural cells located in the subesophagial region, along the ventral midline and in thoracic and abdominal segments. In the adult brain, expression is seen in the medulla and the mushroom body calyx (at protein level).

The protein resides in the secreted. Plays a role in controlling food intake and regulating body size. The protein is Short neuropeptide F (sNPF) of Drosophila melanogaster (Fruit fly).